Consider the following 595-residue polypeptide: Actin-histidine N-methyltransferase (595 aa).

Residues 1–22 (MGKKSRVKTQKSGTGATATVSP) form a disordered region. Over residues 10-20 (QKSGTGATATV) the composition is skewed to polar residues. S-adenosyl-L-methionine contacts are provided by residues Arg75, 104-106 (EGF), Arg254, 275-279 (DMCNH), and 325-327 (SGF). The SET domain maps to 94-314 (EGFEMVNFKE…AGEQIYIFYG (221 aa)). Phosphoserine is present on Ser513. Residues 549–572 (ENGLVNGENSVPNGTRSENENLNQ) show a composition bias toward polar residues. The disordered stretch occupies residues 549–595 (ENGLVNGENSVPNGTRSENENLNQEESKRAVEDAKGSSSDNTAEVKE). The span at 573–583 (EESKRAVEDAK) shows a compositional bias: basic and acidic residues. Over residues 584-595 (GSSSDNTAEVKE) the composition is skewed to polar residues.

The protein belongs to the class V-like SAM-binding methyltransferase superfamily. SETD3 actin-histidine methyltransferase family. In terms of assembly, interacts with MYOD1. Phosphorylated by GSK3B, which is required for recognition by the SCF(FBXW7) complex and subsequent degradation. In terms of processing, ubiquitinated by the SCF(FBXW7) complex following phosphorylation by GSK3B, leading to its degradation by the proteasome.

It localises to the cytoplasm. The protein resides in the nucleus. The catalysed reaction is L-histidyl-[protein] + S-adenosyl-L-methionine = N(tele)-methyl-L-histidyl-[protein] + S-adenosyl-L-homocysteine + H(+). In terms of biological role, protein-histidine N-methyltransferase that specifically mediates 3-methylhistidine (tele-methylhistidine) methylation of actin at 'His-73'. Histidine methylation of actin is required for smooth muscle contraction of the laboring uterus during delivery. Does not have protein-lysine N-methyltransferase activity and probably only catalyzes histidine methylation of actin. The sequence is that of Actin-histidine N-methyltransferase from Papio anubis (Olive baboon).